Reading from the N-terminus, the 396-residue chain is MKRHLGTCLWVLCLASTAFSSLAVTTSPKPTLASAFSGKSKTTAGTTAVKANKTTVELLPMVINTWKFTAANVLAWRILKQSKGGLRQTRNAVVEGCSKCEKLQCDRTVGYGGSPDELGETTLDAMVMDGATMDVGAVAGLRRIKDAIKVARHVLEHTQHTMLVGDAASAFANAMGFESESLITPESKDMWLQWTAENCQPNFWKNVHPDPKVSCGPYKPRPTPLTRWKEDRARNEYEIGRKNHDTIGMIAIDVESNIHAGTSTNGARHKIPGRVGDSPIPGAGAYADNEVGAAVATGDGDVMMRFLPSLLAVEAMRAGKPPAEAAQEGLRRILKYHKDFMGALIAVDRLGNYAAACYGLDEFPFMVSSPAGTDGPTRLETVKCIAGQDKVNVVSL.

The first 23 residues, 1 to 23 (MKRHLGTCLWVLCLASTAFSSLA), serve as a signal peptide directing secretion. 2 disulfides stabilise this stretch: cysteine 100-cysteine 105 and cysteine 199-cysteine 215. Threonine 246 serves as the catalytic Nucleophile. Substrate contacts are provided by residues 274-277 (RVGD) and 297-300 (TGDG). Cysteine 357 and cysteine 384 are oxidised to a cystine.

It belongs to the Ntn-hydrolase family. In terms of assembly, heterotetramer of two alpha and two beta chains arranged as a dimer of alpha/beta heterodimers. In terms of processing, cleaved into an alpha and beta chain by autocatalysis; this activates the enzyme. The N-terminal residue of the beta subunit is responsible for the nucleophile hydrolase activity.

The enzyme catalyses N(4)-(beta-N-acetyl-D-glucosaminyl)-L-asparagine + H2O = N-acetyl-beta-D-glucosaminylamine + L-aspartate + H(+). Cleaves the GlcNAc-Asn bond which joins oligosaccharides to the peptide of asparagine-linked glycoproteins. The protein is Putative N(4)-(beta-N-acetylglucosaminyl)-L-asparaginase GG24090 of Drosophila erecta (Fruit fly).